The chain runs to 405 residues: Peroxisomal membrane protein PEX13 (405 aa).

A compositionally biased stretch (pro residues) spans Met1–Pro11. Residues Met1–Asn71 are disordered. Over Met1 to Glu136 the chain is Peroxisomal matrix. The span at Pro61–Asn71 shows a compositional bias: polar residues. A helical membrane pass occupies residues Ser137–Tyr157. The segment at Met147–Ser235 is targeting to peroxisomes. The Cytoplasmic portion of the chain corresponds to Asn158 to His176. Residues Phe177–Tyr194 traverse the membrane as a helical segment. The interaction with PEX19 stretch occupies residues Phe177–Gln198. Over Arg195–Ser235 the chain is Peroxisomal matrix. Residues Trp236 to Leu256 traverse the membrane as a helical segment. The Cytoplasmic segment spans residues Ser257 to Leu405. Residues Asp274–Lys338 form the SH3 domain. Residue Ser356 is modified to Phosphoserine.

The protein belongs to the peroxin-13 family. In terms of assembly, interacts (via SH3 domain) with PEX14 (via SH3-binding motif); forming the PEX13-PEX14 docking complex. Interacts with PEX19.

The protein localises to the peroxisome membrane. In terms of biological role, component of the PEX13-PEX14 docking complex, a translocon channel that specifically mediates the import of peroxisomal cargo proteins bound to PEX5 receptor. The PEX13-PEX14 docking complex forms a large import pore which can be opened to a diameter of about 9 nm. Mechanistically, PEX5 receptor along with cargo proteins associates with the PEX14 subunit of the PEX13-PEX14 docking complex in the cytosol, leading to the insertion of the receptor into the organelle membrane with the concomitant translocation of the cargo into the peroxisome matrix. Involved in the import of PTS1- and PTS2-type containing proteins. The sequence is that of Peroxisomal membrane protein PEX13 from Mus musculus (Mouse).